Here is a 490-residue protein sequence, read N- to C-terminus: Dual specificity protein kinase CLK3 (490 aa).

A Phosphotyrosine modification is found at Tyr7. A phosphoserine mark is found at Ser9, Ser49, Ser51, Ser67, Ser76, and Ser78. The segment at 22–138 (RRRSYSREHE…SKRSSRSVED (117 aa)) is disordered. 2 stretches are compositionally biased toward basic and acidic residues: residues 26–56 (YSRE…DRLP) and 63–76 (EHRD…EDRS). Residues 103–116 (TRKHAHHCHKRRTR) show a composition bias toward basic residues. The span at 117–130 (SCSSASSRSQQSSK) shows a compositional bias: low complexity. A Phosphoserine modification is found at Ser135. Residues 156-472 (YEIVGNLGEG…LAEALLHPFF (317 aa)) enclose the Protein kinase domain. ATP-binding positions include 162-170 (LGEGTFGKV) and Lys186. Residue Asp283 is the Proton acceptor of the active site.

It belongs to the protein kinase superfamily. CMGC Ser/Thr protein kinase family. Lammer subfamily. Autophosphorylates on all three types of residues.

The protein localises to the nucleus. It is found in the cytoplasm. It localises to the cytoplasmic vesicle. Its subcellular location is the secretory vesicle. The protein resides in the acrosome. It catalyses the reaction L-seryl-[protein] + ATP = O-phospho-L-seryl-[protein] + ADP + H(+). The enzyme catalyses L-threonyl-[protein] + ATP = O-phospho-L-threonyl-[protein] + ADP + H(+). The catalysed reaction is L-tyrosyl-[protein] + ATP = O-phospho-L-tyrosyl-[protein] + ADP + H(+). Leucettine L41 inhibits its kinase activity and affects the regulation of alternative splicing mediated by phosphorylation of SR proteins. Dual specificity kinase acting on both serine/threonine and tyrosine-containing substrates. Phosphorylates serine- and arginine-rich (SR) proteins of the spliceosomal complex. May be a constituent of a network of regulatory mechanisms that enable SR proteins to control RNA splicing and can cause redistribution of SR proteins from speckles to a diffuse nucleoplasmic distribution. Phosphorylates SRSF1 and SRSF3. Regulates the alternative splicing of tissue factor (F3) pre-mRNA in endothelial cells. This chain is Dual specificity protein kinase CLK3 (CLK3), found in Bos taurus (Bovine).